The following is a 660-amino-acid chain: Bifunctional polymyxin resistance protein ArnA (660 aa).

A formyltransferase ArnAFT region spans residues 1–304; the sequence is MKAVIFAYHD…TLGLVAGARL (304 aa). His-104 serves as the catalytic Proton donor; for formyltransferase activity. (6R)-10-formyltetrahydrofolate contacts are provided by residues Arg-114 and 136–140; that span reads VKRAD. The tract at residues 314–660 is dehydrogenase ArnADH; that stretch reads RRIRVLILGV…RSVDVAERAS (347 aa). NAD(+) is bound by residues Asp-347 and 368–369; that span reads DI. Residues Ala-393, Tyr-398, and 432 to 433 contribute to the UDP-alpha-D-glucuronate site; that span reads TS. The active-site Proton acceptor; for decarboxylase activity is Glu-434. Residues Arg-460, Asn-492, 526 to 535, and Tyr-613 contribute to the UDP-alpha-D-glucuronate site; that span reads KLIDGGQQKR. Residue Arg-619 is the Proton donor; for decarboxylase activity of the active site.

The protein in the N-terminal section; belongs to the Fmt family. UDP-L-Ara4N formyltransferase subfamily. In the C-terminal section; belongs to the NAD(P)-dependent epimerase/dehydratase family. UDP-glucuronic acid decarboxylase subfamily. Homohexamer, formed by a dimer of trimers.

The catalysed reaction is UDP-alpha-D-glucuronate + NAD(+) = UDP-beta-L-threo-pentopyranos-4-ulose + CO2 + NADH. It catalyses the reaction UDP-4-amino-4-deoxy-beta-L-arabinose + (6R)-10-formyltetrahydrofolate = UDP-4-deoxy-4-formamido-beta-L-arabinose + (6S)-5,6,7,8-tetrahydrofolate + H(+). It participates in nucleotide-sugar biosynthesis; UDP-4-deoxy-4-formamido-beta-L-arabinose biosynthesis; UDP-4-deoxy-4-formamido-beta-L-arabinose from UDP-alpha-D-glucuronate: step 1/3. The protein operates within nucleotide-sugar biosynthesis; UDP-4-deoxy-4-formamido-beta-L-arabinose biosynthesis; UDP-4-deoxy-4-formamido-beta-L-arabinose from UDP-alpha-D-glucuronate: step 3/3. It functions in the pathway bacterial outer membrane biogenesis; lipopolysaccharide biosynthesis. Bifunctional enzyme that catalyzes the oxidative decarboxylation of UDP-glucuronic acid (UDP-GlcUA) to UDP-4-keto-arabinose (UDP-Ara4O) and the addition of a formyl group to UDP-4-amino-4-deoxy-L-arabinose (UDP-L-Ara4N) to form UDP-L-4-formamido-arabinose (UDP-L-Ara4FN). The modified arabinose is attached to lipid A and is required for resistance to polymyxin and cationic antimicrobial peptides. The polypeptide is Bifunctional polymyxin resistance protein ArnA (Salmonella paratyphi C (strain RKS4594)).